The sequence spans 618 residues: MKQSKMLIPTLREMPSDAQVISHALMVRAGYVRQVSAGIYAYLPLAHRTIEKFKTIMRQEFDKIGAVEMLAPALLTADLWRESGRYETYGEDLYKLKNRDKSDFILGPTHEETFTTLVRDAVKSYKQLPLNLYQIQSKYRDEKRPRNGLLRTREFIMKDGYSFHQSYDDLDVTYDAYRQAYEAIFTRAGLDFKGIIGDGGAMGGKDSQEFMAITPDRTNLDRWLVLDKSIPSLADIPEEVLEEIKAELASWLVSGEDTIAYSSESSYAANLEMATSEYKSSSKVTALDDLVEIETPNCKTIDEVAAFLDVAEHQVIKTLLFMVDHEPVLALLVGNDQINAVKLKNHLGADFLEPASEEEARAILGAGFGSLGPVHLTDGIRIVADRKVQDLANAVAGANKDGYHLTGVNPNRDFQAEYADIREVKEGETSPDRHGVLQFARGIEIGHIFKLGTRYSDSMAANILDENGRAVPIVMGCYGIGVSRILSAVIEQHARLFVSKTPKGDYRYAWGINFPKELAPFDVHLITVNVKDQEAQDLTERVEASLMAKGYDVLTDDRNERVGSKFSDSDLIGLPIRVTIGKKAAEGIVEIKIKATGDSIEVHADSLIETLDILTKDN.

The protein belongs to the class-II aminoacyl-tRNA synthetase family. ProS type 1 subfamily. In terms of assembly, homodimer.

Its subcellular location is the cytoplasm. The catalysed reaction is tRNA(Pro) + L-proline + ATP = L-prolyl-tRNA(Pro) + AMP + diphosphate. Functionally, catalyzes the attachment of proline to tRNA(Pro) in a two-step reaction: proline is first activated by ATP to form Pro-AMP and then transferred to the acceptor end of tRNA(Pro). As ProRS can inadvertently accommodate and process non-cognate amino acids such as alanine and cysteine, to avoid such errors it has two additional distinct editing activities against alanine. One activity is designated as 'pretransfer' editing and involves the tRNA(Pro)-independent hydrolysis of activated Ala-AMP. The other activity is designated 'posttransfer' editing and involves deacylation of mischarged Ala-tRNA(Pro). The misacylated Cys-tRNA(Pro) is not edited by ProRS. This Streptococcus equi subsp. equi (strain 4047) protein is Proline--tRNA ligase.